The sequence spans 227 residues: ATP synthase F(0) complex subunit a (227 aa).

The next 6 membrane-spanning stretches (helical) occupy residues Tyr13 to Ala33, Trp69 to Leu89, Gln98 to Met118, Glu132 to Ile152, Val179 to Leu199, and Leu202 to Tyr222.

It belongs to the ATPase A chain family. Component of the ATP synthase complex composed at least of ATP5F1A/subunit alpha, ATP5F1B/subunit beta, ATP5MC1/subunit c (homooctomer), MT-ATP6/subunit a, MT-ATP8/subunit 8, ATP5ME/subunit e, ATP5MF/subunit f, ATP5MG/subunit g, ATP5MK/subunit k, ATP5MJ/subunit j, ATP5F1C/subunit gamma, ATP5F1D/subunit delta, ATP5F1E/subunit epsilon, ATP5PF/subunit F6, ATP5PB/subunit b, ATP5PD/subunit d, ATP5PO/subunit OSCP. ATP synthase complex consists of a soluble F(1) head domain (subunits alpha(3) and beta(3)) - the catalytic core - and a membrane F(0) domain - the membrane proton channel (subunits c, a, 8, e, f, g, k and j). These two domains are linked by a central stalk (subunits gamma, delta, and epsilon) rotating inside the F1 region and a stationary peripheral stalk (subunits F6, b, d, and OSCP). Interacts with DNAJC30; interaction is direct.

The protein resides in the mitochondrion inner membrane. It carries out the reaction H(+)(in) = H(+)(out). Its function is as follows. Subunit a, of the mitochondrial membrane ATP synthase complex (F(1)F(0) ATP synthase or Complex V) that produces ATP from ADP in the presence of a proton gradient across the membrane which is generated by electron transport complexes of the respiratory chain. ATP synthase complex consist of a soluble F(1) head domain - the catalytic core - and a membrane F(1) domain - the membrane proton channel. These two domains are linked by a central stalk rotating inside the F(1) region and a stationary peripheral stalk. During catalysis, ATP synthesis in the catalytic domain of F(1) is coupled via a rotary mechanism of the central stalk subunits to proton translocation. With the subunit c (ATP5MC1), forms the proton-conducting channel in the F(0) domain, that contains two crucial half-channels (inlet and outlet) that facilitate proton movement from the mitochondrial intermembrane space (IMS) into the matrix. Protons are taken up via the inlet half-channel and released through the outlet half-channel, following a Grotthuss mechanism. This Danio rerio (Zebrafish) protein is ATP synthase F(0) complex subunit a.